The sequence spans 232 residues: Large ribosomal subunit protein uL1 (232 aa).

It belongs to the universal ribosomal protein uL1 family. As to quaternary structure, part of the 50S ribosomal subunit.

Binds directly to 23S rRNA. The L1 stalk is quite mobile in the ribosome, and is involved in E site tRNA release. Its function is as follows. Protein L1 is also a translational repressor protein, it controls the translation of the L11 operon by binding to its mRNA. The chain is Large ribosomal subunit protein uL1 from Dichelobacter nodosus (strain VCS1703A).